The primary structure comprises 173 residues: Photosystem I assembly protein Ycf3 (173 aa).

TPR repeat units lie at residues 35 to 68 (AYVY…EENS), 72 to 105 (SETL…NPNQ), and 120 to 153 (GRIA…NPGG).

It belongs to the Ycf3 family.

It localises to the cellular thylakoid membrane. Its function is as follows. Essential for the assembly of the photosystem I (PSI) complex. May act as a chaperone-like factor to guide the assembly of the PSI subunits. The polypeptide is Photosystem I assembly protein Ycf3 (Synechococcus sp. (strain CC9605)).